Reading from the N-terminus, the 137-residue chain is 2-iminobutanoate/2-iminopropanoate deaminase (137 aa).

S2 is subject to N-acetylserine. Residues K13, K60, and K67 each carry the N6-succinyllysine modification. Residue T74 is modified to Phosphothreonine. S136 carries the phosphoserine modification.

It belongs to the RutC family. Homotrimer. Interacts with YTHDF2. In terms of tissue distribution, expressed predominantly in liver and kidney. Lower levels in lung and brain.

It localises to the cytoplasm. The protein resides in the nucleus. The protein localises to the peroxisome. Its subcellular location is the mitochondrion. The enzyme catalyses 2-iminobutanoate + H2O = 2-oxobutanoate + NH4(+). It carries out the reaction 2-iminopropanoate + H2O = pyruvate + NH4(+). Functionally, catalyzes the hydrolytic deamination of enamine/imine intermediates that form during the course of normal metabolism. May facilitate the release of ammonia from these potentially toxic reactive metabolites, reducing their impact on cellular components. It may act on enamine/imine intermediates formed by several types of pyridoxal-5'-phosphate-dependent dehydratases including L-threonine dehydratase. Also promotes endoribonucleolytic cleavage of some transcripts by promoting recruitment of the ribonuclease P/MRP complex. Acts by bridging YTHDF2 and the ribonuclease P/MRP complex. RIDA/HRSP12 binds to N6-methyladenosine (m6A)-containing mRNAs containing a 5'-GGUUC-3' motif: cooperative binding of RIDA/HRSP12 and YTHDF2 to such transcripts lead to recruitment of the ribonuclease P/MRP complex and subsequent endoribonucleolytic cleavage. The chain is 2-iminobutanoate/2-iminopropanoate deaminase from Homo sapiens (Human).